A 341-amino-acid chain; its full sequence is Thromboxane A2 receptor (341 aa).

Residues 1 to 29 lie on the Extracellular side of the membrane; sequence MWPNGTSLGACFRPVNITLQERRAIASPW. Asn-4 and Asn-16 each carry an N-linked (GlcNAc...) asparagine glycan. Residues 30 to 52 traverse the membrane as a helical segment; it reads FAASFCALGLGSNLLALSVLAGA. Residues 53-65 are Cytoplasmic-facing; the sequence is RPGAGPRSSFLAL. The helical transmembrane segment at 66–86 threads the bilayer; the sequence is LCGLVLTDFLGLLVTGAIVAS. Residues 87–105 lie on the Extracellular side of the membrane; the sequence is QHAALLDWRATDPSCRLCY. An intrachain disulfide couples Cys-104 to Cys-181. Residues 106 to 127 traverse the membrane as a helical segment; sequence FMGVAMVFFGLCPLLLGAAMAS. At 128 to 147 the chain is on the cytoplasmic side; the sequence is ERFVGITRPFSRPTATSRRA. Residues 148 to 170 form a helical membrane-spanning segment; that stretch reads WATVGLVWVAAGALGLLPLLGLG. The Extracellular portion of the chain corresponds to 171–191; sequence RYSVQYPGSWCFLTLGTQRGD. A helical transmembrane segment spans residues 192 to 217; the sequence is VVFGLIFALLGSASVGLSLLLNTVSV. Over 218–244 the chain is Cytoplasmic; that stretch reads ATLCRVYHTREATQRPRDCEVEMMVQL. A helical transmembrane segment spans residues 245 to 268; it reads VGIMVVATVCWMPLLVFIMQTLLQ. Over 269–287 the chain is Extracellular; the sequence is TPPVMSFSGQLLRATEHQL. The helical transmembrane segment at 288–309 threads the bilayer; the sequence is LIYLRVATWNQILDPWVYILFR. The Cytoplasmic segment spans residues 310–341; it reads RSVLRRLHPRFSSQLQAVSLRRPPAQAMLSGP. Ser-328 bears the Phosphoserine mark.

Belongs to the G-protein coupled receptor 1 family. In terms of assembly, interacts with RPGRIP1L. Interacts with RACK1; the interaction regulates TBXA2R cell surface expression.

The protein localises to the cell membrane. Receptor for thromboxane A2 (TXA2), a potent stimulator of platelet aggregation. The activity of this receptor is mediated by a G-protein that activates a phosphatidylinositol-calcium second messenger system. In the kidney, the binding of TXA2 to glomerular TP receptors causes intense vasoconstriction. Activates phospholipase C and adenylyl cyclase. This chain is Thromboxane A2 receptor (Tbxa2r), found in Mus musculus (Mouse).